Consider the following 309-residue polypeptide: Homoserine O-succinyltransferase (309 aa).

Cys142 serves as the catalytic Acyl-thioester intermediate. 2 residues coordinate substrate: Lys163 and Ser192. His235 (proton acceptor) is an active-site residue. The active site involves Glu237. Arg249 contacts substrate.

This sequence belongs to the MetA family.

It localises to the cytoplasm. It carries out the reaction L-homoserine + succinyl-CoA = O-succinyl-L-homoserine + CoA. It participates in amino-acid biosynthesis; L-methionine biosynthesis via de novo pathway; O-succinyl-L-homoserine from L-homoserine: step 1/1. Functionally, transfers a succinyl group from succinyl-CoA to L-homoserine, forming succinyl-L-homoserine. This is Homoserine O-succinyltransferase from Yersinia enterocolitica serotype O:8 / biotype 1B (strain NCTC 13174 / 8081).